The following is a 205-amino-acid chain: Holliday junction branch migration complex subunit RuvA (205 aa).

The tract at residues 1–64 is domain I; sequence MIGKLKGTID…EDQLKLFGFL (64 aa). Positions 65 to 143 are domain II; the sequence is SALEREWFRL…AFSGEMAPSI (79 aa). Residues 144-153 form a flexible linker region; sequence GLKQELGEGV. The tract at residues 153-205 is domain III; sequence VAAAPVADAVSALTNLGYSRDQAANAVAAALKNGGEGGDSAKLIRLGLKELSR.

Belongs to the RuvA family. In terms of assembly, homotetramer. Forms an RuvA(8)-RuvB(12)-Holliday junction (HJ) complex. HJ DNA is sandwiched between 2 RuvA tetramers; dsDNA enters through RuvA and exits via RuvB. An RuvB hexamer assembles on each DNA strand where it exits the tetramer. Each RuvB hexamer is contacted by two RuvA subunits (via domain III) on 2 adjacent RuvB subunits; this complex drives branch migration. In the full resolvosome a probable DNA-RuvA(4)-RuvB(12)-RuvC(2) complex forms which resolves the HJ.

Its subcellular location is the cytoplasm. Its function is as follows. The RuvA-RuvB-RuvC complex processes Holliday junction (HJ) DNA during genetic recombination and DNA repair, while the RuvA-RuvB complex plays an important role in the rescue of blocked DNA replication forks via replication fork reversal (RFR). RuvA specifically binds to HJ cruciform DNA, conferring on it an open structure. The RuvB hexamer acts as an ATP-dependent pump, pulling dsDNA into and through the RuvAB complex. HJ branch migration allows RuvC to scan DNA until it finds its consensus sequence, where it cleaves and resolves the cruciform DNA. The polypeptide is Holliday junction branch migration complex subunit RuvA (Rhizobium meliloti (strain 1021) (Ensifer meliloti)).